We begin with the raw amino-acid sequence, 358 residues long: WD repeat-containing protein 53 (358 aa).

5 WD repeats span residues 8–47, 92–131, 134–174, 195–234, and 239–278; these read GHSS…GHMQ, VNEE…VTRS, RHSN…PVWI, LNPA…CERE, and GHTL…EKLQ. Residues 288–309 are disordered; sequence KKAKRAACPTQGGNSRAPGAED.

It belongs to the WD repeat WDR53 family.

This chain is WD repeat-containing protein 53 (Wdr53), found in Mus musculus (Mouse).